A 202-amino-acid polypeptide reads, in one-letter code: Superoxide dismutase [Fe] (202 aa).

Fe cation contacts are provided by His30, His78, Asp164, and His168.

Belongs to the iron/manganese superoxide dismutase family. In terms of assembly, homotetramer. The cofactor is Fe cation.

It catalyses the reaction 2 superoxide + 2 H(+) = H2O2 + O2. Functionally, destroys superoxide anion radicals which are normally produced within the cells and which are toxic to biological systems. This Methanothermobacter marburgensis (strain ATCC BAA-927 / DSM 2133 / JCM 14651 / NBRC 100331 / OCM 82 / Marburg) (Methanobacterium thermoautotrophicum) protein is Superoxide dismutase [Fe] (sod).